Consider the following 513-residue polypeptide: Putative thymidine phosphorylase (513 aa).

This sequence belongs to the thymidine/pyrimidine-nucleoside phosphorylase family. Type 2 subfamily.

It carries out the reaction thymidine + phosphate = 2-deoxy-alpha-D-ribose 1-phosphate + thymine. This Rhodopseudomonas palustris (strain BisA53) protein is Putative thymidine phosphorylase.